An 834-amino-acid polypeptide reads, in one-letter code: DNA gyrase subunit A (834 aa).

One can recognise a Topo IIA-type catalytic domain in the interval 53-520 (LPDVRDGLKP…NDTEIDEEDL (468 aa)). Catalysis depends on Tyr141, which acts as the O-(5'-phospho-DNA)-tyrosine intermediate. A GyrA-box motif is present at residues 547–553 (QGRGGVG).

The protein belongs to the type II topoisomerase GyrA/ParC subunit family. Heterotetramer, composed of two GyrA and two GyrB chains. In the heterotetramer, GyrA contains the active site tyrosine that forms a transient covalent intermediate with DNA, while GyrB binds cofactors and catalyzes ATP hydrolysis.

It localises to the cytoplasm. It carries out the reaction ATP-dependent breakage, passage and rejoining of double-stranded DNA.. A type II topoisomerase that negatively supercoils closed circular double-stranded (ds) DNA in an ATP-dependent manner to modulate DNA topology and maintain chromosomes in an underwound state. Negative supercoiling favors strand separation, and DNA replication, transcription, recombination and repair, all of which involve strand separation. Also able to catalyze the interconversion of other topological isomers of dsDNA rings, including catenanes and knotted rings. Type II topoisomerases break and join 2 DNA strands simultaneously in an ATP-dependent manner. This is DNA gyrase subunit A from Brachyspira hyodysenteriae (strain ATCC 49526 / WA1).